The sequence spans 62 residues: Large ribosomal subunit protein eL24 (62 aa).

Zn(2+)-binding residues include cysteine 6, cysteine 9, cysteine 32, and cysteine 36. The C4-type zinc finger occupies 6 to 36 (CSFCGADIPPGYGIMYVRSDGTVQRFCSRKC).

This sequence belongs to the eukaryotic ribosomal protein eL24 family. Part of the 50S ribosomal subunit. Forms a cluster with proteins L3 and L14. Requires Zn(2+) as cofactor.

Its function is as follows. Binds to the 23S rRNA. This is Large ribosomal subunit protein eL24 from Pyrobaculum calidifontis (strain DSM 21063 / JCM 11548 / VA1).